A 313-amino-acid polypeptide reads, in one-letter code: Interferon-inducible double-stranded RNA-dependent protein kinase activator A (313 aa).

The disordered stretch occupies residues 1–20; sequence MSHSRHRAEAPPLQREDSGT. Sufficient for self-association and interaction with TARBP2 stretches follow at residues 1 to 103, 102 to 195, and 195 to 313; these read MSHS…KANA, NASI…FSNI, and ISPE…AERK. Ser-18 is subject to Phosphoserine. 3 DRBM domains span residues 34–101, 126–194, and 240–308; these read TPIQ…ILKA, NPIG…KFSN, and DYIQ…YLKI. A phosphoserine mark is found at Ser-167, Ser-246, and Ser-287.

This sequence belongs to the PRKRA family. Homodimer. Interacts with DICER1, AGO2 and TARBP2. Also able to interact with dsRNA. Interacts with EIF2AK2/PKR through its DRBM domains. Interacts with DUS2L (via DRBM domain). Interacts with UBC9. Forms a complex with UBC9 and p53/TP53. In terms of processing, phosphorylated at Ser-246 in unstressed cells and at Ser-287 in stressed cells. Phosphorylation at Ser-246 appears to be a prerequisite for subsequent phosphorylation at Ser-287. Phosphorylation at Ser-246 and Ser-287 are necessary for activation of EIF2AK2/PKR under conditions of stress. In terms of tissue distribution, expressed in brain, heart, kidney, liver, lung, muscle, spleen and testis.

The protein resides in the cytoplasm. It localises to the perinuclear region. Its function is as follows. Required for siRNA production by DICER1 and for subsequent siRNA-mediated post-transcriptional gene silencing. Does not seem to be required for processing of pre-miRNA to miRNA by DICER1. Activates EIF2AK2/PKR in the absence of double-stranded RNA (dsRNA), leading to phosphorylation of EIF2S1/EFI2-alpha and inhibition of translation and induction of apoptosis. Promotes UBC9-p53/TP53 association and sumoylation and phosphorylation of p53/TP53 at 'Lys-386' at 'Ser-392' respectively and enhances its activity in a EIF2AK2/PKR-dependent manner. This is Interferon-inducible double-stranded RNA-dependent protein kinase activator A (Prkra) from Mus musculus (Mouse).